The sequence spans 403 residues: MHGFHDVFIQILLLLAISVSVIAIAKLLKEPDSIALVLVGLVLGLTELPIIEDAERYITQSEVFQATIISLFLPILLGDATLKLPFHHLFSQKKTVLGLAFVGTFVSSICIGTAAYFLLDLPLAVAFTFAALMSATDPISVLSIFKSLGVPQKMSTVMEGESLFNDGIAVVLFKIASIYLLTYMEMGWAGLGSGVFLFLKFAIGGALVGLVLGYFFSQVIRVFDDYPLEVAFSALLFFGSYFIAEHFHTSGVIAVVVGGFVFGDYGAKIGMSKETKTNINTFWDSVTLIANALIFLMVGLEIRNIDLAGNWGVIVGAILIVLVGRTIAVYLGTGWVQELSSKERLLINWGGLRGSLSVALALSLPMDFAGRDQVLLLTFSVVLFSLIVQGLTLKPLIKKLGMI.

Residues Met1–Asp6 are Cytoplasmic-facing. A helical membrane pass occupies residues Val7–Leu27. The Extracellular portion of the chain corresponds to Leu28–Glu30. The helical transmembrane segment at Pro31–Ile51 threads the bilayer. Over Glu52 to Gln65 the chain is Cytoplasmic. Residues Ala66–Phe86 traverse the membrane as a helical segment. Topologically, residues His87–Gly98 are extracellular. A helical membrane pass occupies residues Leu99 to Leu119. The Cytoplasmic portion of the chain corresponds to Asp120–Ala124. A helical transmembrane segment spans residues Val125–Phe145. At Lys146–Gly167 the chain is on the extracellular side. The helical transmembrane segment at Ile168–Trp188 threads the bilayer. Over Ala189–Val195 the chain is Cytoplasmic. Residues Phe196 to Phe216 form a helical membrane-spanning segment. The Extracellular segment spans residues Ser217 to Gln218. The chain crosses the membrane as a helical span at residues Val219 to Gly239. The Cytoplasmic segment spans residues Ser240–Tyr241. The helical transmembrane segment at Phe242–Phe262 threads the bilayer. At Gly263–Thr281 the chain is on the extracellular side. A helical membrane pass occupies residues Phe282–Ile302. Over Arg303–Asn310 the chain is Cytoplasmic. The chain crosses the membrane as a helical span at residues Trp311 to Leu331. Over Gly332 to Asp372 the chain is Extracellular. Residues Gln373 to Leu393 traverse the membrane as a helical segment. The Cytoplasmic portion of the chain corresponds to Lys394 to Ile403.

This sequence belongs to the monovalent cation:proton antiporter 1 (CPA1) transporter (TC 2.A.36) family.

Its subcellular location is the cell membrane. In terms of biological role, na(+)/H(+) antiporter that extrudes sodium in exchange for external protons. Can also transport lithium. This Halobacillus dabanensis protein is Na(+)/H(+) antiporter NhaH (nhaH).